The following is a 438-amino-acid chain: Minor capsid protein p49 (438 aa).

The protein belongs to the asfivirus p49 structural protein family.

It is found in the virion. Together with the penton and the other minor capsid proteins (M1249L, p17), forms a complicated network immediately below the outer capsid shell, stabilizing the whole capsid. Plays an essential role in the formation of infectious virus particles. Especially required for the formation of the capsid vertices. During virion assembly, associates with the membrane and probably mediates the docking of the penton complex to the inner membrane, where it recruits the capsomers to form the penton core. The chain is Minor capsid protein p49 from Ornithodoros (relapsing fever ticks).